The sequence spans 368 residues: Ferrochelatase (368 aa).

H209 and E290 together coordinate Fe cation. The interval 347-368 is disordered; sequence REEQEQQAHISREEARRLGADQ.

The protein belongs to the ferrochelatase family.

Its subcellular location is the cytoplasm. It catalyses the reaction heme b + 2 H(+) = protoporphyrin IX + Fe(2+). Its pathway is porphyrin-containing compound metabolism; protoheme biosynthesis; protoheme from protoporphyrin-IX: step 1/1. Functionally, catalyzes the ferrous insertion into protoporphyrin IX. In Janthinobacterium sp. (strain Marseille) (Minibacterium massiliensis), this protein is Ferrochelatase.